The sequence spans 247 residues: Dynein axonemal assembly factor 19 (247 aa).

Residues 12–32 (LEKELHSALQADRKYQRENDA) adopt a coiled-coil conformation.

This sequence belongs to the DNAAF19/PR46b family. In terms of assembly, homodimer. In terms of tissue distribution, expressed in all cells bearing motile cilia.

Its subcellular location is the cytoplasm. It is found in the cell projection. The protein localises to the cilium. It localises to the flagellum. In terms of biological role, dynein-attachment factor required for cilia motility. The chain is Dynein axonemal assembly factor 19 (dnaaf19) from Danio rerio (Zebrafish).